The following is a 362-amino-acid chain: Aspartate carbamoyltransferase catalytic subunit (362 aa).

A disordered region spans residues 1 to 22; it reads MPKTAMTDSTSKTSTNTASSDM. Residues 7-20 show a composition bias toward low complexity; that stretch reads TDSTSKTSTNTASS. Positions 100 and 101 each coordinate carbamoyl phosphate. An L-aspartate-binding site is contributed by K128. Carbamoyl phosphate-binding residues include R150, H180, and Q183. L-aspartate is bound by residues R214 and R269. The carbamoyl phosphate site is built by G310 and P311.

Belongs to the aspartate/ornithine carbamoyltransferase superfamily. ATCase family. In terms of assembly, heterododecamer (2C3:3R2) of six catalytic PyrB chains organized as two trimers (C3), and six regulatory PyrI chains organized as three dimers (R2).

It carries out the reaction carbamoyl phosphate + L-aspartate = N-carbamoyl-L-aspartate + phosphate + H(+). Its pathway is pyrimidine metabolism; UMP biosynthesis via de novo pathway; (S)-dihydroorotate from bicarbonate: step 2/3. Its function is as follows. Catalyzes the condensation of carbamoyl phosphate and aspartate to form carbamoyl aspartate and inorganic phosphate, the committed step in the de novo pyrimidine nucleotide biosynthesis pathway. The protein is Aspartate carbamoyltransferase catalytic subunit of Psychrobacter sp. (strain PRwf-1).